The sequence spans 377 residues: Serine protease inhibitor (377 aa).

The N-terminal stretch at 1-27 (MAALQAAVSSQLAISFFSSLIVPGAEK) is a signal peptide. N-linked (GlcNAc...) asparagine glycosylation is present at N301. The RCL stretch occupies residues 328 to 349 (GTEAAAATGFGVNFMSMPMQVR). N361 carries N-linked (GlcNAc...) asparagine glycosylation.

Belongs to the serpin family.

Functionally, inhibitor of serine proteases. Inhibits chymotrypsin, cathepsin G and human neutrophil elastase. This chain is Serine protease inhibitor, found in Cyanea capillata (Lion's mane jellyfish).